A 419-amino-acid polypeptide reads, in one-letter code: Serine--tRNA ligase (419 aa).

Residues 45–66 (ADSLRAEQKAASKSVGGASPEE) form a disordered region. Residue 226–228 (TSE) participates in L-serine binding. ATP is bound by residues 257 to 259 (RRE) and V273. E280 lines the L-serine pocket. Position 344–347 (344–347 (ELTS)) interacts with ATP. An L-serine-binding site is contributed by T379.

The protein belongs to the class-II aminoacyl-tRNA synthetase family. Type-1 seryl-tRNA synthetase subfamily. In terms of assembly, homodimer. The tRNA molecule binds across the dimer.

It is found in the cytoplasm. It carries out the reaction tRNA(Ser) + L-serine + ATP = L-seryl-tRNA(Ser) + AMP + diphosphate + H(+). The enzyme catalyses tRNA(Sec) + L-serine + ATP = L-seryl-tRNA(Sec) + AMP + diphosphate + H(+). The protein operates within aminoacyl-tRNA biosynthesis; selenocysteinyl-tRNA(Sec) biosynthesis; L-seryl-tRNA(Sec) from L-serine and tRNA(Sec): step 1/1. Its function is as follows. Catalyzes the attachment of serine to tRNA(Ser). Is also able to aminoacylate tRNA(Sec) with serine, to form the misacylated tRNA L-seryl-tRNA(Sec), which will be further converted into selenocysteinyl-tRNA(Sec). This is Serine--tRNA ligase from Mycobacterium ulcerans (strain Agy99).